Reading from the N-terminus, the 52-residue chain is Sperm protamine P1 (52 aa).

The disordered stretch occupies residues 1-27 (MARYSCCRSHSRSRSRRRRQRCRRRRR). Residues 9–27 (SHSRSRSRRRRQRCRRRRR) are compositionally biased toward basic residues.

This sequence belongs to the protamine P1 family. As to expression, testis.

Its subcellular location is the nucleus. The protein resides in the chromosome. Functionally, protamines substitute for histones in the chromatin of sperm during the haploid phase of spermatogenesis. They compact sperm DNA into a highly condensed, stable and inactive complex. The sequence is that of Sperm protamine P1 (PRM1) from Rhinolophus ferrumequinum (Greater horseshoe bat).